A 160-amino-acid chain; its full sequence is Nucleotide-binding protein VFMJ11_1323 (160 aa).

The protein belongs to the YajQ family.

Functionally, nucleotide-binding protein. This chain is Nucleotide-binding protein VFMJ11_1323, found in Aliivibrio fischeri (strain MJ11) (Vibrio fischeri).